We begin with the raw amino-acid sequence, 156 residues long: MIP18 family protein galla-2 (156 aa).

Belongs to the MIP18 family. In terms of assembly, component of the CGX complex composed of crb, galla (galla-1 or galla-2) and Xpd. Interacts with crb (via intracellular domain). Also able to interact with Xpd in the absence of crb. Interacts with Mms19.

In terms of biological role, component of the crb-galla-Xpd (CGX) complex which is essential for proper mitotic chromosome segregation in early embryos. The CGX complex is also required for cell proliferation in developing wing disks. In the CGX complex, acts with crb to recruit Xpd thus forming the functional complex. This is MIP18 family protein galla-2 from Drosophila melanogaster (Fruit fly).